The sequence spans 725 residues: Portal protein (725 aa).

Belongs to the p22likevirus portal protein family. Homododecamer. Interacts with the terminase large subunit; this interaction allows the packaging of viral DNA. Interacts (via C-terminus) with the head-to-tail adapter protein gp4; this interaction participates in the head completion. Interacts with the scaffolding protein; this interaction initiates procapsid assembly, thereby ensuring incorporation of only one portal ring per capsid. Interacts with the capsid protein.

The protein resides in the virion. Functionally, forms the portal vertex of the capsid. This portal plays critical roles in head assembly, genome packaging, neck/tail attachment, and genome ejection. Procapsid assembly may initiate with a nucleation complex composed of portal and scaffolding proteins. The portal protein multimerizes as a single ring-shaped homododecamer arranged around a central channel. Switches upon genome packaging from an asymmetrical conformation in the procapsid (PC-portal) to a symmetrical ring in the mature capsid (MV-portal). This change of conformation may serve as a signal for headful packaging. The polypeptide is Portal protein (1) (Salmonella typhimurium (Bacteriophage P22)).